We begin with the raw amino-acid sequence, 1342 residues long: DNA-directed RNA polymerase subunit beta (1342 aa).

It belongs to the RNA polymerase beta chain family. In terms of assembly, the RNAP catalytic core consists of 2 alpha, 1 beta, 1 beta' and 1 omega subunit. When a sigma factor is associated with the core the holoenzyme is formed, which can initiate transcription.

The catalysed reaction is RNA(n) + a ribonucleoside 5'-triphosphate = RNA(n+1) + diphosphate. In terms of biological role, DNA-dependent RNA polymerase catalyzes the transcription of DNA into RNA using the four ribonucleoside triphosphates as substrates. The chain is DNA-directed RNA polymerase subunit beta from Salmonella choleraesuis (strain SC-B67).